Reading from the N-terminus, the 309-residue chain is Protein FdhE (309 aa).

This sequence belongs to the FdhE family.

The protein localises to the cytoplasm. Functionally, necessary for formate dehydrogenase activity. The chain is Protein FdhE from Escherichia coli O127:H6 (strain E2348/69 / EPEC).